Consider the following 620-residue polypeptide: Ion-translocating oxidoreductase complex subunit C (620 aa).

4Fe-4S ferredoxin-type domains are found at residues T366–Y397 and K407–Y436. Positions 377, 380, 383, 387, 416, 419, 422, and 426 each coordinate [4Fe-4S] cluster.

This sequence belongs to the 4Fe4S bacterial-type ferredoxin family. RnfC subfamily. In terms of assembly, the complex is composed of six subunits: RnfA, RnfB, RnfC, RnfD, RnfE and RnfG. Requires [4Fe-4S] cluster as cofactor.

Its subcellular location is the cell inner membrane. In terms of biological role, part of a membrane-bound complex that couples electron transfer with translocation of ions across the membrane. The protein is Ion-translocating oxidoreductase complex subunit C of Yersinia pestis bv. Antiqua (strain Antiqua).